Consider the following 408-residue polypeptide: tRNA-specific 2-thiouridylase MnmA (408 aa).

ATP contacts are provided by residues 38–45 (GMSGGVDS) and Met64. An interaction with target base in tRNA region spans residues 124-126 (NPD). Residue Cys129 is the Nucleophile of the active site. An intrachain disulfide couples Cys129 to Cys231. Gly153 is an ATP binding site. The interval 181–183 (KDQ) is interaction with tRNA. The active-site Cysteine persulfide intermediate is Cys231. An interaction with tRNA region spans residues 348–349 (RY).

It belongs to the MnmA/TRMU family.

It localises to the cytoplasm. The enzyme catalyses S-sulfanyl-L-cysteinyl-[protein] + uridine(34) in tRNA + AH2 + ATP = 2-thiouridine(34) in tRNA + L-cysteinyl-[protein] + A + AMP + diphosphate + H(+). In terms of biological role, catalyzes the 2-thiolation of uridine at the wobble position (U34) of tRNA, leading to the formation of s(2)U34. This is tRNA-specific 2-thiouridylase MnmA from Psychrobacter arcticus (strain DSM 17307 / VKM B-2377 / 273-4).